Here is a 505-residue protein sequence, read N- to C-terminus: Cytochrome P450 52C1 (505 aa).

A helical membrane pass occupies residues 4–21 (LFCFLAGIIVVYKAAQYY). A heme-binding site is contributed by Cys453.

Belongs to the cytochrome P450 family. Heme is required as a cofactor.

It is found in the membrane. Its function is as follows. Together with an NADPH cytochrome P450 the enzyme system catalyzes the terminal hydroxylation as the first step in the assimilation of alkanes and fatty acids. This Candida tropicalis (Yeast) protein is Cytochrome P450 52C1 (CYP52C1).